Consider the following 479-residue polypeptide: Anaerobic nitric oxide reductase flavorubredoxin (479 aa).

Residues 30 to 210 (LRGSSYNSYL…PFSRLVTPKI (181 aa)) form a zinc metallo-hydrolase region. Positions 79, 81, 83, 147, 166, and 227 each coordinate Fe cation. The Flavodoxin-like domain occupies 254-393 (ITIFYDTMSN…LCREHGREIA (140 aa)). FMN contacts are provided by residues 260–264 (TMSNN) and 342–369 (AFGS…EMSL). A Rubredoxin-like domain is found at 423-474 (GPRMQCSVCQWIYDPAKGEPMQDVAPGTPWSEVPDNFLCPECSLGKDVFDEL). The Fe cation site is built by Cys-428, Cys-431, Cys-461, and Cys-464.

In the N-terminal section; belongs to the zinc metallo-hydrolase group 3 family. In terms of assembly, homotetramer. Requires Fe cation as cofactor. It depends on FMN as a cofactor.

It is found in the cytoplasm. The protein operates within nitrogen metabolism; nitric oxide reduction. In terms of biological role, anaerobic nitric oxide reductase; uses NADH to detoxify nitric oxide (NO), protecting several 4Fe-4S NO-sensitive enzymes. Has at least 2 reductase partners, only one of which (NorW, flavorubredoxin reductase) has been identified. NO probably binds to the di-iron center; electrons enter from the NorW at rubredoxin and are transferred sequentially to the FMN center and the di-iron center. Also able to function as an aerobic oxygen reductase. This chain is Anaerobic nitric oxide reductase flavorubredoxin, found in Shigella sonnei (strain Ss046).